We begin with the raw amino-acid sequence, 297 residues long: Elongation factor Ts (297 aa).

The tract at residues 82–85 is involved in Mg(2+) ion dislocation from EF-Tu; it reads TDFV. Low complexity predominate over residues 223 to 265; sequence AQTAAAAETAPPEVSEPEPAAAVTAEEPTPEPVAAAEQPAEPV. Residues 223 to 297 are disordered; that stretch reads AQTAAAAETA…GKSRSNKKKK (75 aa). Positions 286–297 are enriched in basic residues; the sequence is SGGKSRSNKKKK.

This sequence belongs to the EF-Ts family.

The protein localises to the cytoplasm. Its function is as follows. Associates with the EF-Tu.GDP complex and induces the exchange of GDP to GTP. It remains bound to the aminoacyl-tRNA.EF-Tu.GTP complex up to the GTP hydrolysis stage on the ribosome. The sequence is that of Elongation factor Ts from Thermosynechococcus vestitus (strain NIES-2133 / IAM M-273 / BP-1).